Consider the following 335-residue polypeptide: Glucokinase (335 aa).

ATP is bound at residue 11–16 (ADIGGT).

It belongs to the bacterial glucokinase family.

The protein localises to the cytoplasm. The enzyme catalyses D-glucose + ATP = D-glucose 6-phosphate + ADP + H(+). The sequence is that of Glucokinase from Xanthomonas oryzae pv. oryzae (strain MAFF 311018).